Reading from the N-terminus, the 581-residue chain is Arginine--tRNA ligase (581 aa).

Positions 126-136 match the 'HIGH' region motif; it reads PNLAKEMHVGH.

It belongs to the class-I aminoacyl-tRNA synthetase family. In terms of assembly, monomer.

The protein localises to the cytoplasm. The catalysed reaction is tRNA(Arg) + L-arginine + ATP = L-arginyl-tRNA(Arg) + AMP + diphosphate. The polypeptide is Arginine--tRNA ligase (Shewanella baltica (strain OS223)).